Here is a 172-residue protein sequence, read N- to C-terminus: Ribosome maturation factor RimM (172 aa).

A PRC barrel domain is found at 97–170 (DDEYYYDEII…LITIDVLEGL (74 aa)).

This sequence belongs to the RimM family. As to quaternary structure, binds ribosomal protein uS19.

The protein resides in the cytoplasm. In terms of biological role, an accessory protein needed during the final step in the assembly of 30S ribosomal subunit, possibly for assembly of the head region. Essential for efficient processing of 16S rRNA. May be needed both before and after RbfA during the maturation of 16S rRNA. It has affinity for free ribosomal 30S subunits but not for 70S ribosomes. This is Ribosome maturation factor RimM from Leuconostoc citreum (strain KM20).